Reading from the N-terminus, the 577-residue chain is Copine-8 (577 aa).

C2 domains are found at residues 19–146 (TSAT…RLEK) and 155–278 (KCGT…FNVY). Asp-52, Asp-58, Asp-112, Asp-114, Ser-117, Lys-122, Asp-124, Asp-186, Asp-192, Asp-248, Asp-250, and Asp-256 together coordinate Ca(2+). Ser-273 is modified (phosphoserine). A VWFA domain is found at 322-523 (NFTVAIDFTA…VQFVPFRDYI (202 aa)).

This sequence belongs to the copine family. Requires Ca(2+) as cofactor.

Its function is as follows. Probable calcium-dependent phospholipid-binding protein that may play a role in calcium-mediated intracellular processes. The polypeptide is Copine-8 (Mus musculus (Mouse)).